A 366-amino-acid chain; its full sequence is Glucan organizing enzyme 1 (366 aa).

The Extracellular portion of the chain corresponds to M1–L24. Residues P25–F45 traverse the membrane as a helical segment. Residues P46–H366 lie on the Cytoplasmic side of the membrane.

The protein belongs to the glycosyltransferase 32 family.

The protein localises to the cell membrane. Functionally, plays a role in the localization of glycogen rosettes to the plasma membrane. Required for correct cell wall organization and may facilitate the connection between beta-1,3-glucan and beta-1,6-glucan in the cell wall. This Cryptococcus neoformans var. grubii serotype A (strain H99 / ATCC 208821 / CBS 10515 / FGSC 9487) (Filobasidiella neoformans var. grubii) protein is Glucan organizing enzyme 1.